We begin with the raw amino-acid sequence, 196 residues long: Interferon lambda-3 (196 aa).

The first 21 residues, 1-21, serve as a signal peptide directing secretion; the sequence is MTGDCMPVLVLMAAVLTVTGA. 3 cysteine pairs are disulfide-bonded: cysteine 37–cysteine 136, cysteine 71–cysteine 169, and cysteine 188–cysteine 195.

Belongs to the lambda interferon family.

Its subcellular location is the secreted. Cytokine with antiviral, antitumour and immunomodulatory activities. Plays a critical role in the antiviral host defense, predominantly in the epithelial tissues. Acts as a ligand for the heterodimeric class II cytokine receptor composed of IL10RB and IFNLR1, and receptor engagement leads to the activation of the JAK/STAT signaling pathway resulting in the expression of IFN-stimulated genes (ISG), which mediate the antiviral state. Has a restricted receptor distribution and therefore restricted targets: is primarily active in epithelial cells and this cell type-selective action is because of the epithelial cell-specific expression of its receptor IFNLR1. Seems not to be essential for early virus-activated host defense in vaginal infection, but plays an important role in Toll-like receptor (TLR)-induced antiviral defense. Plays a significant role in the antiviral immune defense in the intestinal epithelium. Exerts an immunomodulatory effect by up-regulating MHC class I antigen expression. In Homo sapiens (Human), this protein is Interferon lambda-3 (IFNL3).